The chain runs to 228 residues: UPF0758 protein Gura_4138 (228 aa).

In terms of domain architecture, MPN spans 106–228 (RFTSPSQVFE…FLSFVDRGMM (123 aa)). H177, H179, and D190 together coordinate Zn(2+). The short motif at 177–190 (HNHPTGDPTPSRED) is the JAMM motif element.

This sequence belongs to the UPF0758 family.

The polypeptide is UPF0758 protein Gura_4138 (Geotalea uraniireducens (strain Rf4) (Geobacter uraniireducens)).